Here is a 192-residue protein sequence, read N- to C-terminus: MRKAHIFRQTKETAIDMEIDLDGSGVYQIETPVGFLNHMMESFSKHSFIDIKLKAEGDIDVSYHHLVEDVGIVLGQAISKALGDKSGINRYGFAILPMDEALVLCSLDFSGRGLFFYDRKDLRGKITEFDFELIWEFIKGFALESKATVHIKILDGHILHHIAECSIKSLAFSVRQAVAKQDKGILSTKGLL.

This sequence belongs to the imidazoleglycerol-phosphate dehydratase family.

The protein resides in the cytoplasm. It carries out the reaction D-erythro-1-(imidazol-4-yl)glycerol 3-phosphate = 3-(imidazol-4-yl)-2-oxopropyl phosphate + H2O. Its pathway is amino-acid biosynthesis; L-histidine biosynthesis; L-histidine from 5-phospho-alpha-D-ribose 1-diphosphate: step 6/9. In Hydrogenobaculum sp. (strain Y04AAS1), this protein is Imidazoleglycerol-phosphate dehydratase.